The primary structure comprises 346 residues: Growth hormone-inducible transmembrane protein (346 aa).

The N-terminal 45 residues, 1 to 45 (MLAARLVCLRTLPSRVFQPTFITKASPLVKNSITKNQWLLTPSRE), are a transit peptide targeting the mitochondrion. The Mitochondrial matrix segment spans residues 46–83 (YATKTRIRTHRGKTGQELKEAALEPSLEKVFKIDQMGK). Residues 84-104 (WFVAGGAAVGLGALCYYGLGM) traverse the membrane as a helical segment. The Mitochondrial intermembrane segment spans residues 105 to 126 (SNEIGAIEKAVIWPQYVKDRIH). The chain crosses the membrane as a helical span at residues 127–147 (STYMYLAGSIGLTALSALALA). At 148-160 (RSPALMNFMMTGS) the chain is on the mitochondrial matrix side. Residues 161–181 (WMTIGATFAAMIGAGMLVQSI) traverse the membrane as a helical segment. The Mitochondrial intermembrane portion of the chain corresponds to 182–191 (SYEQSPGPKH). The helical transmembrane segment at 192-212 (LAWMLHSGVMGAVVAPLTILG) threads the bilayer. At 213–214 (GP) the chain is on the mitochondrial matrix side. A helical membrane pass occupies residues 215–235 (LLLRAAWYTAGIVGGLSTVAM). At 236–245 (CAPSEKFLNM) the chain is on the mitochondrial intermembrane side. Residues 246 to 266 (GAPLGVGLGLVFASSLGSMFL) form a helical membrane-spanning segment. At 267–272 (PPTSVA) the chain is on the mitochondrial matrix side. A helical membrane pass occupies residues 273-293 (GATLYSVAMYGGLVLFSMFLL). At 294–346 (YDTQKVVKRAEITPAYGAQKYDPINSMLTIYMDTLNIFMRVATMLATGSNRKK) the chain is on the mitochondrial intermembrane side.

It belongs to the BI1 family. As to quaternary structure, interacts with LETM1 and AFG3L2. Undergoes AFG3L2-mediated proteolytic degradation, upon hyperpolarization of mitochondria.

The protein resides in the mitochondrion inner membrane. Functionally, plays an important role in maintenance of mitochondrial morphology and in mediating either calcium or potassium/proton antiport. Mediates proton-dependent calcium efflux from mitochondrion. Also functions as an electroneutral mitochondrial proton/potassium exchanger. Required for the mitochondrial tubular network and cristae organization. Involved in apoptotic release of cytochrome c. Inhibits AFG3L2 proteolytic activity, stimulating respiration and stabilizing respiratory enzymes in actively respiring mitochondria. However, when mitochondria become hyperpolarized, GHITM loses its inhibitory activity toward AFG3L2 and the now active AFG3L2 turns first on GHITM and, if hyperpolarization persists, on other proteins of the mitochondria, leading to a broad remodeling of the proteome. This is Growth hormone-inducible transmembrane protein (Ghitm) from Rattus norvegicus (Rat).